Consider the following 632-residue polypeptide: uncharacterized protein (632 aa).

A run of 4 helical transmembrane segments spans residues 255 to 275 (LFYA…ELRV), 506 to 526 (IALL…LTSI), 566 to 586 (MIFA…SMVF), and 603 to 623 (IVVI…AVLF).

The protein resides in the cell membrane. This is an uncharacterized protein from Mycoplasma pneumoniae (strain ATCC 29342 / M129 / Subtype 1) (Mycoplasmoides pneumoniae).